A 418-amino-acid polypeptide reads, in one-letter code: Adenylosuccinate synthetase (418 aa).

Residues 12–18 (GDEGKGK) and 40–42 (GHT) each bind GTP. The Proton acceptor role is filled by aspartate 13. Residues aspartate 13 and glycine 40 each coordinate Mg(2+). IMP contacts are provided by residues 13-16 (DEGK), 38-41 (NAGH), threonine 128, arginine 142, glutamine 221, threonine 236, and arginine 299. The active-site Proton donor is histidine 41. 295–301 (ATTGRNR) provides a ligand contact to substrate. GTP-binding positions include arginine 301, 327-329 (KAD), and 399-401 (SYG).

This sequence belongs to the adenylosuccinate synthetase family. As to quaternary structure, homodimer. Mg(2+) is required as a cofactor.

Its subcellular location is the cytoplasm. The catalysed reaction is IMP + L-aspartate + GTP = N(6)-(1,2-dicarboxyethyl)-AMP + GDP + phosphate + 2 H(+). It participates in purine metabolism; AMP biosynthesis via de novo pathway; AMP from IMP: step 1/2. Its function is as follows. Plays an important role in the de novo pathway of purine nucleotide biosynthesis. Catalyzes the first committed step in the biosynthesis of AMP from IMP. The sequence is that of Adenylosuccinate synthetase from Finegoldia magna (strain ATCC 29328 / DSM 20472 / WAL 2508) (Peptostreptococcus magnus).